The primary structure comprises 268 residues: Undecaprenyl-diphosphatase (268 aa).

The next 7 membrane-spanning stretches (helical) occupy residues 5–25 (SIIS…IPVS), 43–63 (GNTF…LVYF), 84–104 (LSVL…HGFI), 109–129 (FETP…LYVI), 184–204 (AAEF…ALDL), 213–233 (IDDI…GIFV), and 248–268 (PFAI…WLLG).

The protein belongs to the UppP family.

It localises to the cell inner membrane. The enzyme catalyses di-trans,octa-cis-undecaprenyl diphosphate + H2O = di-trans,octa-cis-undecaprenyl phosphate + phosphate + H(+). Catalyzes the dephosphorylation of undecaprenyl diphosphate (UPP). Confers resistance to bacitracin. The protein is Undecaprenyl-diphosphatase of Sinorhizobium medicae (strain WSM419) (Ensifer medicae).